Here is a 209-residue protein sequence, read N- to C-terminus: PRA1 family protein E (209 aa).

The disordered stretch occupies residues 1-20 (MNQKPPPYGYGGAGGGGVGP). Over residues 9-19 (GYGGAGGGGVG) the composition is skewed to gly residues. Transmembrane regions (helical) follow at residues 90 to 110 (IVFL…VVFI), 132 to 152 (VDDK…LVYT), and 155 to 175 (GENV…HGAF).

This sequence belongs to the PRA1 family. In terms of assembly, interacts with PRA1B1, PRA1B2, PRA1B3, PRA1B4, PRA1B5 and PRA1B6. In terms of tissue distribution, expressed in hypocotyls, roots, lateral roots, columella cells, leaves and shoot apex.

The protein localises to the endosome membrane. Functionally, may be involved in both secretory and endocytic intracellular trafficking in the endosomal/prevacuolar compartments. The polypeptide is PRA1 family protein E (PRA1E) (Arabidopsis thaliana (Mouse-ear cress)).